Reading from the N-terminus, the 274-residue chain is Phosphate import ATP-binding protein PstB (274 aa).

The 242-residue stretch at 28-269 folds into the ABC transporter domain; that stretch reads VTVRDLNFYY…PNDRRTQDYI (242 aa). 60 to 67 serves as a coordination point for ATP; the sequence is GPSGCGKS.

Belongs to the ABC transporter superfamily. Phosphate importer (TC 3.A.1.7) family. In terms of assembly, the complex is composed of two ATP-binding proteins (PstB), two transmembrane proteins (PstC and PstA) and a solute-binding protein (PstS).

The protein localises to the cell inner membrane. It catalyses the reaction phosphate(out) + ATP + H2O = ADP + 2 phosphate(in) + H(+). Part of the ABC transporter complex PstSACB involved in phosphate import. Responsible for energy coupling to the transport system. This chain is Phosphate import ATP-binding protein PstB, found in Rhodopseudomonas palustris (strain HaA2).